The sequence spans 382 residues: Serine protease 23 (382 aa).

Residues 1 to 22 form the signal peptide; sequence MAGIPGLFILLVLLCVFMQVSP. A glycan (N-linked (GlcNAc...) asparagine) is linked at Asn92. Cys159 and Cys175 are disulfide-bonded. The active-site Charge relay system is His174. The N-linked (GlcNAc...) asparagine glycan is linked to Asn206. Residues Asp239 and Ser315 each act as charge relay system in the active site.

Belongs to the peptidase S1 family.

The protein localises to the secreted. The polypeptide is Serine protease 23 (Prss23) (Mus musculus (Mouse)).